The sequence spans 391 residues: GTPase Obg (391 aa).

The Obg domain maps to 1–159 (MKFIDEALIR…RDLLLELMLL (159 aa)). One can recognise an OBG-type G domain in the interval 160–333 (ADVGMLGLPN…LTRDIMDFIE (174 aa)). GTP is bound by residues 166–173 (GLPNAGKS), 191–195 (FTTLV), 213–216 (DIPG), 283–286 (NKID), and 314–316 (SAA). Residues Ser-173 and Thr-193 each contribute to the Mg(2+) site.

The protein belongs to the TRAFAC class OBG-HflX-like GTPase superfamily. OBG GTPase family. In terms of assembly, monomer. Requires Mg(2+) as cofactor.

The protein localises to the cytoplasm. An essential GTPase which binds GTP, GDP and possibly (p)ppGpp with moderate affinity, with high nucleotide exchange rates and a fairly low GTP hydrolysis rate. Plays a role in control of the cell cycle, stress response, ribosome biogenesis and in those bacteria that undergo differentiation, in morphogenesis control. The polypeptide is GTPase Obg (Actinobacillus pleuropneumoniae serotype 7 (strain AP76)).